We begin with the raw amino-acid sequence, 299 residues long: Lipoyl synthase (299 aa).

Residues cysteine 45, cysteine 50, cysteine 56, cysteine 71, cysteine 75, cysteine 78, and serine 284 each contribute to the [4Fe-4S] cluster site. A Radical SAM core domain is found at 57–273; it reads YSKGTATFMI…GDVALAKDFL (217 aa).

This sequence belongs to the radical SAM superfamily. Lipoyl synthase family. Requires [4Fe-4S] cluster as cofactor.

The protein localises to the cytoplasm. It carries out the reaction [[Fe-S] cluster scaffold protein carrying a second [4Fe-4S](2+) cluster] + N(6)-octanoyl-L-lysyl-[protein] + 2 oxidized [2Fe-2S]-[ferredoxin] + 2 S-adenosyl-L-methionine + 4 H(+) = [[Fe-S] cluster scaffold protein] + N(6)-[(R)-dihydrolipoyl]-L-lysyl-[protein] + 4 Fe(3+) + 2 hydrogen sulfide + 2 5'-deoxyadenosine + 2 L-methionine + 2 reduced [2Fe-2S]-[ferredoxin]. It functions in the pathway protein modification; protein lipoylation via endogenous pathway; protein N(6)-(lipoyl)lysine from octanoyl-[acyl-carrier-protein]: step 2/2. In terms of biological role, catalyzes the radical-mediated insertion of two sulfur atoms into the C-6 and C-8 positions of the octanoyl moiety bound to the lipoyl domains of lipoate-dependent enzymes, thereby converting the octanoylated domains into lipoylated derivatives. This chain is Lipoyl synthase, found in Desulfotalea psychrophila (strain LSv54 / DSM 12343).